The sequence spans 102 residues: Urease subunit beta (102 aa).

Belongs to the urease beta subunit family. Heterotrimer of UreA (gamma), UreB (beta) and UreC (alpha) subunits. Three heterotrimers associate to form the active enzyme.

It is found in the cytoplasm. The enzyme catalyses urea + 2 H2O + H(+) = hydrogencarbonate + 2 NH4(+). It functions in the pathway nitrogen metabolism; urea degradation; CO(2) and NH(3) from urea (urease route): step 1/1. The sequence is that of Urease subunit beta from Bordetella pertussis (strain Tohama I / ATCC BAA-589 / NCTC 13251).